The sequence spans 199 residues: AICSLVLYLLTLMLMEKLSSNTVDAQEVELIWTILPAIVLILLALPSLQILYMMDEIDEPDLTLKAIGHQWYWTYEYTDFKDLSFDSYMVPTSELPSGHFRLLEVDHRVVVPMESPIRVIITAGDVLHSWAVPTLGVKTDAIPGRLNQTSFITTRPGIFYGQCSEICGANHSYMPIVVESTPLTHFENWSSLLSASSSL.

Residues 1 to 13 (AICSLVLYLLTLM) traverse the membrane as a helical segment. The Mitochondrial matrix portion of the chain corresponds to 14–26 (LMEKLSSNTVDAQ). A helical transmembrane segment spans residues 27-54 (EVELIWTILPAIVLILLALPSLQILYMM). Residues 55 to 199 (DEIDEPDLTL…SSLLSASSSL (145 aa)) lie on the Mitochondrial intermembrane side of the membrane. 6 residues coordinate Cu cation: histidine 128, cysteine 163, glutamate 165, cysteine 167, histidine 171, and methionine 174. A Mg(2+)-binding site is contributed by glutamate 165.

This sequence belongs to the cytochrome c oxidase subunit 2 family. As to quaternary structure, component of the cytochrome c oxidase (complex IV, CIV), a multisubunit enzyme composed of 14 subunits. The complex is composed of a catalytic core of 3 subunits MT-CO1, MT-CO2 and MT-CO3, encoded in the mitochondrial DNA, and 11 supernumerary subunits COX4I, COX5A, COX5B, COX6A, COX6B, COX6C, COX7A, COX7B, COX7C, COX8 and NDUFA4, which are encoded in the nuclear genome. The complex exists as a monomer or a dimer and forms supercomplexes (SCs) in the inner mitochondrial membrane with NADH-ubiquinone oxidoreductase (complex I, CI) and ubiquinol-cytochrome c oxidoreductase (cytochrome b-c1 complex, complex III, CIII), resulting in different assemblies (supercomplex SCI(1)III(2)IV(1) and megacomplex MCI(2)III(2)IV(2)). Found in a complex with TMEM177, COA6, COX18, COX20, SCO1 and SCO2. Interacts with TMEM177 in a COX20-dependent manner. Interacts with COX20. Interacts with COX16. It depends on Cu cation as a cofactor.

The protein localises to the mitochondrion inner membrane. The catalysed reaction is 4 Fe(II)-[cytochrome c] + O2 + 8 H(+)(in) = 4 Fe(III)-[cytochrome c] + 2 H2O + 4 H(+)(out). Its function is as follows. Component of the cytochrome c oxidase, the last enzyme in the mitochondrial electron transport chain which drives oxidative phosphorylation. The respiratory chain contains 3 multisubunit complexes succinate dehydrogenase (complex II, CII), ubiquinol-cytochrome c oxidoreductase (cytochrome b-c1 complex, complex III, CIII) and cytochrome c oxidase (complex IV, CIV), that cooperate to transfer electrons derived from NADH and succinate to molecular oxygen, creating an electrochemical gradient over the inner membrane that drives transmembrane transport and the ATP synthase. Cytochrome c oxidase is the component of the respiratory chain that catalyzes the reduction of oxygen to water. Electrons originating from reduced cytochrome c in the intermembrane space (IMS) are transferred via the dinuclear copper A center (CU(A)) of subunit 2 and heme A of subunit 1 to the active site in subunit 1, a binuclear center (BNC) formed by heme A3 and copper B (CU(B)). The BNC reduces molecular oxygen to 2 water molecules using 4 electrons from cytochrome c in the IMS and 4 protons from the mitochondrial matrix. This is Cytochrome c oxidase subunit 2 (MT-CO2) from Dromaius novaehollandiae (Emu).